Consider the following 319-residue polypeptide: Coproporphyrin III ferrochelatase 2 (319 aa).

Fe-coproporphyrin III-binding positions include tyrosine 13, arginine 30, 46-47 (RY), serine 54, and tyrosine 125. Residues histidine 181 and glutamate 262 each contribute to the Fe(2+) site.

Belongs to the ferrochelatase family.

The protein resides in the cytoplasm. It carries out the reaction Fe-coproporphyrin III + 2 H(+) = coproporphyrin III + Fe(2+). The protein operates within porphyrin-containing compound metabolism; protoheme biosynthesis. In terms of biological role, involved in coproporphyrin-dependent heme b biosynthesis. Catalyzes the insertion of ferrous iron into coproporphyrin III to form Fe-coproporphyrin III. This is Coproporphyrin III ferrochelatase 2 from Bacillus cereus (strain ATCC 14579 / DSM 31 / CCUG 7414 / JCM 2152 / NBRC 15305 / NCIMB 9373 / NCTC 2599 / NRRL B-3711).